Consider the following 168-residue polypeptide: Cyanate hydratase (168 aa).

Active-site residues include arginine 94, glutamate 97, and serine 120.

The protein belongs to the cyanase family.

It catalyses the reaction cyanate + hydrogencarbonate + 3 H(+) = NH4(+) + 2 CO2. Catalyzes the reaction of cyanate with bicarbonate to produce ammonia and carbon dioxide. The protein is Cyanate hydratase of Oryza sativa subsp. indica (Rice).